The following is a 428-amino-acid chain: Serine--tRNA ligase (428 aa).

231 to 233 (TSE) contacts L-serine. ATP is bound by residues 262–264 (RRE) and V278. Residue E285 participates in L-serine binding. An ATP-binding site is contributed by 349–352 (ELTS). T384 lines the L-serine pocket.

It belongs to the class-II aminoacyl-tRNA synthetase family. Type-1 seryl-tRNA synthetase subfamily. Homodimer. The tRNA molecule binds across the dimer.

The protein localises to the cytoplasm. It catalyses the reaction tRNA(Ser) + L-serine + ATP = L-seryl-tRNA(Ser) + AMP + diphosphate + H(+). It carries out the reaction tRNA(Sec) + L-serine + ATP = L-seryl-tRNA(Sec) + AMP + diphosphate + H(+). It functions in the pathway aminoacyl-tRNA biosynthesis; selenocysteinyl-tRNA(Sec) biosynthesis; L-seryl-tRNA(Sec) from L-serine and tRNA(Sec): step 1/1. Catalyzes the attachment of serine to tRNA(Ser). Is also able to aminoacylate tRNA(Sec) with serine, to form the misacylated tRNA L-seryl-tRNA(Sec), which will be further converted into selenocysteinyl-tRNA(Sec). The sequence is that of Serine--tRNA ligase from Bifidobacterium adolescentis (strain ATCC 15703 / DSM 20083 / NCTC 11814 / E194a).